A 64-amino-acid polypeptide reads, in one-letter code: Large ribosomal subunit protein bL28c (64 aa).

It belongs to the bacterial ribosomal protein bL28 family.

It localises to the plastid. The protein resides in the chloroplast. The chain is Large ribosomal subunit protein bL28c from Gracilaria tenuistipitata var. liui (Red alga).